Here is a 157-residue protein sequence, read N- to C-terminus: AM-toxin biosynthesis protein 15 (157 aa).

Positions 17 to 43 (RARHWDSKQGSSNSDVASGGSEVAGNS) are disordered.

It functions in the pathway mycotoxin biosynthesis. In terms of biological role, part of the gene clusters that mediate the biosynthesis of AM-toxins, host-selective toxins (HSTs) causing Alternaria blotch on apple, a worldwide distributed disease. AM-toxins are cyclic depsipeptides containing the 3 residues 2-hydroxy-isovaleric acid (2-HIV), dehydroalanine, L-alanine which are common for all 3 AM-toxins I to III. The fourth precursor is L-alpha-amino-methoxyphenyl-valeric acid (L-Amv) for AM-toxin I, L-alpha-amino-phenyl-valeric acid (L-Apv) for AM-toxin II, and L-alpha-amino-hydroxyphenyl-valeric acid (L-Ahv) for AM-toxin III. AM-toxins have two target sites for affecting susceptible apple cells; they cause invagination of the plasma membrane and electrolyte loss and chloroplast disorganization. The non-ribosomal peptide synthetase AMT1 contains 4 catalytic modules and is responsible for activation of each residue in AM-toxin. The aldo-keto reductase AMT2 catalyzes the conversion of 2-keto-isovaleric acid (2-KIV) to 2-hydroxy-isovaleric acid (2-HIV), one of the precursor residues incorporated by AMT1 during AM-toxin biosynthesis, by reduction of its ketone to an alcohol. The cytochrome P450 monooxygenase AMT3 and the thioesterase AMT4 are also important for AM-toxin production, but their exact function within the AM-toxin biosynthesis are not known yet. Up to 21 proteins (including AMT1 to AMT4) are predicted to be involved in AM-toxin biosynthesis since their expression ishighly up-regulated in AM-toxin-producing cultures. In Alternaria alternata (Alternaria rot fungus), this protein is AM-toxin biosynthesis protein 15.